Reading from the N-terminus, the 56-residue chain is Attractin (56 aa).

3 disulfide bridges follow: Cys4-Cys41, Cys13-Cys33, and Cys20-Cys26. Residue Asn25 is glycosylated (N-linked (GlcNAc...) asparagine).

Produced by the albumen gland of the egg cordons.

The protein localises to the secreted. Water-borne pheromone that attract the marine mollusk Aplysia into breeding aggregations and coordinate male and female reproductive behavior within the aggregation. This chain is Attractin (ATT), found in Aplysia depilans (Sea hare).